The sequence spans 22 residues: thr operon leader peptide (22 aa).

This sequence belongs to the thr operon leader peptide family.

This protein is involved in control of the biosynthesis of threonine. The polypeptide is thr operon leader peptide (Yersinia enterocolitica serotype O:8 / biotype 1B (strain NCTC 13174 / 8081)).